A 69-amino-acid chain; its full sequence is Conotoxin Lt5.7 (69 aa).

The N-terminal stretch at 1–19 (MLCLPVFIILLLLASPAAP) is a signal peptide. The propeptide occupies 20 to 54 (KSLETRIQNDLIRAGLTDADLKTEKGFLSGLLNVA).

Belongs to the conotoxin T superfamily. In terms of processing, contains 2 disulfide bonds that can be either 'C1-C3, C2-C4' or 'C1-C4, C2-C3', since these disulfide connectivities have been observed for conotoxins with cysteine framework V (for examples, see AC P0DQQ7 and AC P81755). In terms of tissue distribution, expressed by the venom duct.

The protein resides in the secreted. The chain is Conotoxin Lt5.7 from Conus litteratus (Lettered cone).